The sequence spans 180 residues: Inner membrane-spanning protein YciB (180 aa).

The next 6 membrane-spanning stretches (helical) occupy residues 4–24, 25–45, 52–72, 76–96, 118–138, and 150–170; these read LLSE…GGGI, QHAT…CYVI, LSII…ISGN, IKIK…MSGI, ITLS…NEVV, and FKVF…LPLL.

It belongs to the YciB family.

It localises to the cell inner membrane. Functionally, plays a role in cell envelope biogenesis, maintenance of cell envelope integrity and membrane homeostasis. This is Inner membrane-spanning protein YciB from Rickettsia massiliae (strain Mtu5).